Consider the following 1226-residue polypeptide: DNA-directed RNA polymerase subunit beta (1226 aa).

Belongs to the RNA polymerase beta chain family. In terms of assembly, the RNAP catalytic core consists of 2 alpha, 1 beta, 1 beta' and 1 omega subunit. When a sigma factor is associated with the core the holoenzyme is formed, which can initiate transcription.

It catalyses the reaction RNA(n) + a ribonucleoside 5'-triphosphate = RNA(n+1) + diphosphate. In terms of biological role, DNA-dependent RNA polymerase catalyzes the transcription of DNA into RNA using the four ribonucleoside triphosphates as substrates. The protein is DNA-directed RNA polymerase subunit beta of Leptospira borgpetersenii serovar Hardjo-bovis (strain JB197).